The following is a 57-amino-acid chain: UPF0337 protein SCO0678 (57 aa).

Basic and acidic residues-rich tracts occupy residues 1-22 (MAGN…KEAA) and 42-57 (GDAR…VFRH). The disordered stretch occupies residues 1-57 (MAGNEKSRAKMEQAKGKAKEAAGRAVGNERMTAEGRAAQSKGDARQAKEKGKDVFRH).

Belongs to the UPF0337 (CsbD) family.

This is UPF0337 protein SCO0678 from Streptomyces coelicolor (strain ATCC BAA-471 / A3(2) / M145).